The primary structure comprises 218 residues: Embryonic polyadenylate-binding protein 2-A (218 aa).

The span at 1–16 (MSERVSEEPGLDKGDG) shows a compositional bias: basic and acidic residues. 2 disordered regions span residues 1 to 26 (MSERVSEEPGLDKGDGAEECELDDPE) and 169 to 218 (RTNM…NHPY). The RRM domain maps to 93–170 (RSVYVGNVDY…RTIKVLPKRT (78 aa)). Low complexity predominate over residues 205–218 (FRGCGRPGPLNHPY).

Its subcellular location is the cytoplasm. Functionally, binds the poly(A) tail of mRNA. Unable to interact with the cap-binding complex and is therefore unlikely to be involved in translation initiation. This chain is Embryonic polyadenylate-binding protein 2-A (Pabpn1l-a), found in Xenopus laevis (African clawed frog).